The chain runs to 922 residues: Hexokinase-3 (922 aa).

A disordered region spans residues 1–23 (MATIGPSGLHPGERASVCPHEGV). Hexokinase domains are found at residues 25-469 (RPSG…MVTA) and 475-911 (AAHR…LVTA). The interval 82 to 218 (HGTEQGDFLV…TYRIDVVAMV (137 aa)) is hexokinase small subdomain 1. 93-100 (ELGATGAS) serves as a coordination point for ATP. 93-102 (ELGATGASLR) provides a ligand contact to D-glucose 6-phosphate. D-glucose is bound by residues Ser166, 183–184 (TK), and 219–220 (ND). Residues 219–458 (NDTVGTMMGC…CDVSFIPSVD (240 aa)) are hexokinase large subdomain 1. Asp220 and Thr243 together coordinate D-glucose 6-phosphate. D-glucose-binding positions include Asn246, Glu271, and 302–305 (QRFE). 424–426 (GGR) lines the D-glucose 6-phosphate pocket. Residues 436-437 (RI) and 540-545 (DLGGTN) contribute to the ATP site. Residues 529-660 (DGSERGDFLA…AVELNVVAIV (132 aa)) form a hexokinase small subdomain 2 region. Residue 540–544 (DLGGT) participates in D-glucose 6-phosphate binding. D-glucose-binding positions include 608–609 (SF), 625–626 (TK), and 661–662 (ND). The hexokinase large subdomain 2 stretch occupies residues 661–900 (NDTVGTMMSC…CTVTFLQSED (240 aa)). D-glucose 6-phosphate contacts are provided by Asp662 and Thr685. Position 685 (Thr685) interacts with ATP. D-glucose is bound by residues 687–688 (TN), Glu713, and Glu747. ATP is bound by residues 752-753 (GM), 789-793 (TKFLS), and 868-872 (TLYKL). D-glucose 6-phosphate contacts are provided by residues 866–868 (DGT) and Ser902.

Belongs to the hexokinase family.

It catalyses the reaction a D-hexose + ATP = a D-hexose 6-phosphate + ADP + H(+). The enzyme catalyses D-fructose + ATP = D-fructose 6-phosphate + ADP + H(+). It carries out the reaction D-glucose + ATP = D-glucose 6-phosphate + ADP + H(+). It functions in the pathway carbohydrate metabolism; hexose metabolism. It participates in carbohydrate degradation; glycolysis; D-glyceraldehyde 3-phosphate and glycerone phosphate from D-glucose: step 1/4. Its activity is regulated as follows. Hexokinase is an allosteric enzyme inhibited by its product D-glucose 6-phosphate. Its function is as follows. Catalyzes the phosphorylation of hexose, such as D-glucose and D-fructose, to hexose 6-phosphate (D-glucose 6-phosphate and D-fructose 6-phosphate, respectively). Mediates the initial step of glycolysis by catalyzing phosphorylation of D-glucose to D-glucose 6-phosphate. In Mus musculus (Mouse), this protein is Hexokinase-3.